A 287-amino-acid polypeptide reads, in one-letter code: uncharacterized protein (287 aa).

Belongs to the A.longa ORF167/ORF288 family.

Its subcellular location is the plastid. This is an uncharacterized protein from Euglena longa (Euglenophycean alga).